A 238-amino-acid chain; its full sequence is Accessory gene regulator A (238 aa).

Positions 2–125 (KIFICEDDPK…LRTRIIDCLE (124 aa)) constitute a Response regulatory domain. Residue Asp59 is modified to 4-aspartylphosphate. The HTH LytTR-type domain occupies 143 to 238 (IELKRGSNSV…YASVRNVKKI (96 aa)).

It localises to the cytoplasm. Required for high-level post-exponential phase expression of a series of secreted proteins. This is Accessory gene regulator A (agrA) from Staphylococcus aureus (strain COL).